We begin with the raw amino-acid sequence, 267 residues long: L-erythrulose-1-phosphate isomerase (267 aa).

The active-site Electrophile is His95. Catalysis depends on Glu168, which acts as the Proton acceptor. Substrate contacts are provided by Gly174 and Ser211.

It belongs to the triosephosphate isomerase family. In terms of assembly, homodimer.

Its subcellular location is the cytoplasm. The enzyme catalyses L-erythrulose 1-phosphate = D-erythrulose 4-phosphate. Its pathway is carbohydrate metabolism; erythritol degradation. Catalyzes the isomerization of D-erythrulose-4P to L-erythrulose-1P. The polypeptide is L-erythrulose-1-phosphate isomerase (Rhizobium etli (strain ATCC 51251 / DSM 11541 / JCM 21823 / NBRC 15573 / CFN 42)).